Here is a 718-residue protein sequence, read N- to C-terminus: Zinc finger protein 39 (718 aa).

The KRAB domain maps to 59–130; that stretch reads VSFEDVSVDF…EDVPKQSRAD (72 aa). The C2H2-type 1 zinc-finger motif lies at 298–320; that stretch reads FECSICKKTFCTKCELMKHKKIH. The segment at 353-375 adopts a C2H2-type 2; degenerate zinc-finger fold; it reads HRCKQCEKCFHQKNQQNVHERVP. 11 C2H2-type zinc fingers span residues 409–431, 437–459, 465–487, 493–515, 521–543, 549–571, 577–599, 605–627, 633–655, 661–683, and 689–711; these read YGCN…QKIH, YGCE…QRTH, YECK…HRTH, YECD…QKVH, YECE…QKTH, YECN…QGTH, YQCE…QRNH, YACE…QRSH, YSCE…QRTH, YECK…QVTH, and FECQ…QRIH.

In terms of tissue distribution, predominantly in the spermatocytes and spermatids of testes.

The protein localises to the nucleus. Functionally, a putative DNA-binding regulatory protein associated with meiosis in spermatogenesis. The protein is Zinc finger protein 39 (Zfp39) of Mus musculus (Mouse).